The sequence spans 480 residues: Bifunctional pantoate ligase/cytidylate kinase (480 aa).

The interval 1–243 (MPTMGGLHQG…CGTTRLIDHV (243 aa)) is pantoate--beta-alanine ligase. Residue 4-11 (MGGLHQGH) participates in ATP binding. The Proton donor role is filled by His11. Position 34 (Gln34) interacts with (R)-pantoate. A beta-alanine-binding site is contributed by Gln34. 123–126 (GEKD) lines the ATP pocket. Gln129 contacts (R)-pantoate. ATP contacts are provided by residues Val152 and 160 to 163 (LSSR). The cytidylate kinase stretch occupies residues 244–480 (FLMTRQPLVA…GEEAWPTPAG (237 aa)).

The protein in the N-terminal section; belongs to the pantothenate synthetase family. In the C-terminal section; belongs to the cytidylate kinase family. Type 1 subfamily.

The protein localises to the cytoplasm. It catalyses the reaction (R)-pantoate + beta-alanine + ATP = (R)-pantothenate + AMP + diphosphate + H(+). The catalysed reaction is CMP + ATP = CDP + ADP. It carries out the reaction dCMP + ATP = dCDP + ADP. The protein operates within cofactor biosynthesis; (R)-pantothenate biosynthesis; (R)-pantothenate from (R)-pantoate and beta-alanine: step 1/1. Catalyzes the condensation of pantoate with beta-alanine in an ATP-dependent reaction via a pantoyl-adenylate intermediate. In terms of biological role, catalyzes the transfer of a phosphate group from ATP to either CMP or dCMP to form CDP or dCDP and ADP, respectively. The chain is Bifunctional pantoate ligase/cytidylate kinase from Synechococcus sp. (strain CC9605).